The following is a 567-amino-acid chain: Geranylgeranyl transferase type-2 subunit alpha (567 aa).

6 PFTA repeats span residues 44 to 78, 88 to 122, 124 to 158, 159 to 193, 207 to 241, and 363 to 397; these read LDESVLELTSQILGANPDFATLWNCRREVLQQLET, LVKAELGFLESCLRVNPKSYGTWHHRCWLLSRLPE, NWARELELCARFLEADERNFHCWDYRRFVAAQAAV, APAEELAFTDSLITRNFSNYSSWHYRSCLLPQLHP, VLLRELELVQNAFFTDPNDQSAWFYHRWLLGRAEP, and VLQSELESCKELQELEPENKWCLLTIILLMRALDP. Phosphoserine is present on serine 98. 5 LRR repeats span residues 442 to 463, 464 to 486, 487 to 508, 509 to 530, and 534 to 555; these read DVRVLHLAHKDLTVLCHLEQLL, LVTHLDLSHNRLRALPPALAALR, CLEVLQASDNVLENLDGVANLP, RLRELLLCNNRLQQSAALQTLA, and RLVFLNLQGNSLCQEEGIRERL.

This sequence belongs to the protein prenyltransferase subunit alpha family. As to quaternary structure, heterotrimer composed of RABGGTA, RABGGTB and CHM; within this trimer, RABGGTA and RABGGTB form the catalytic component B, while CHM (component A) mediates peptide substrate binding. The Rab GGTase dimer (RGGT) interacts with CHM (component A) prior to Rab protein binding; the association is stabilized by geranylgeranyl pyrophosphate (GGpp). The CHM:RGGT:Rab complex is destabilized by GGpp. Interacts with non-phosphorylated form of RAB8A; phosphorylation of RAB8A at 'Thr-72' disrupts this interaction.

It catalyses the reaction geranylgeranyl diphosphate + L-cysteinyl-[protein] = S-geranylgeranyl-L-cysteinyl-[protein] + diphosphate. Its activity is regulated as follows. The enzymatic reaction requires the aid of a Rab escort protein (also called component A), such as CHM. Functionally, catalyzes the transfer of a geranylgeranyl moiety from geranylgeranyl diphosphate to both cysteines of Rab proteins with the C-terminal sequence -XXCC, -XCXC and -CCXX, such as RAB1A, RAB3A, RAB5A and RAB7A. In Mus musculus (Mouse), this protein is Geranylgeranyl transferase type-2 subunit alpha (Rabggta).